A 370-amino-acid polypeptide reads, in one-letter code: Peptide chain release factor 2 (370 aa).

Glutamine 252 carries the N5-methylglutamine modification.

This sequence belongs to the prokaryotic/mitochondrial release factor family. In terms of processing, methylated by PrmC. Methylation increases the termination efficiency of RF2.

It localises to the cytoplasm. In terms of biological role, peptide chain release factor 2 directs the termination of translation in response to the peptide chain termination codons UGA and UAA. This chain is Peptide chain release factor 2, found in Mycobacterium avium (strain 104).